A 122-amino-acid polypeptide reads, in one-letter code: Large ribosomal subunit protein eL8 (122 aa).

The protein belongs to the eukaryotic ribosomal protein eL8 family. Part of the 50S ribosomal subunit. Probably part of the RNase P complex.

It localises to the cytoplasm. Functionally, multifunctional RNA-binding protein that recognizes the K-turn motif in ribosomal RNA, the RNA component of RNase P, box H/ACA, box C/D and box C'/D' sRNAs. This Methanothrix thermoacetophila (strain DSM 6194 / JCM 14653 / NBRC 101360 / PT) (Methanosaeta thermophila) protein is Large ribosomal subunit protein eL8.